The following is a 210-amino-acid chain: dTTP/UTP pyrophosphatase (210 aa).

Catalysis depends on Asp-89, which acts as the Proton acceptor.

It belongs to the Maf family. YhdE subfamily. It depends on a divalent metal cation as a cofactor.

Its subcellular location is the cytoplasm. It carries out the reaction dTTP + H2O = dTMP + diphosphate + H(+). The enzyme catalyses UTP + H2O = UMP + diphosphate + H(+). In terms of biological role, nucleoside triphosphate pyrophosphatase that hydrolyzes dTTP and UTP. May have a dual role in cell division arrest and in preventing the incorporation of modified nucleotides into cellular nucleic acids. The protein is dTTP/UTP pyrophosphatase of Burkholderia orbicola (strain AU 1054).